Here is a 447-residue protein sequence, read N- to C-terminus: Mannose/glucose-specific lectin (447 aa).

3 repeat units span residues 1–149 (SLKG…VQPV), 150–295 (PHGT…VKPR), and 296–447 (DVEG…DTAV). The segment at 1–447 (SLKGMISVGP…GIFVKPDTAV (447 aa)) is 3 X approximate tandem repeats. Jacalin-type lectin domains follow at residues 5 to 148 (MISV…FVQP), 153 to 294 (TISF…YVKP), and 300 to 443 (SISI…FVKP).

Belongs to the jacalin lectin family. Homodimer. Post-translationally, the N-terminus is blocked.

In terms of biological role, mannose/glucose specific lectin. Shows agglutinating activity against rabbit erythrocytes. This Parkia platycephala protein is Mannose/glucose-specific lectin.